The chain runs to 165 residues: UPF0303 protein BTH_I2506 (165 aa).

The protein belongs to the UPF0303 family.

The polypeptide is UPF0303 protein BTH_I2506 (Burkholderia thailandensis (strain ATCC 700388 / DSM 13276 / CCUG 48851 / CIP 106301 / E264)).